Consider the following 798-residue polypeptide: Elongation factor G, mitochondrial (798 aa).

Residues 1 to 24 (MRVIRAAAALNSSCAASSRQGARY) constitute a mitochondrion transit peptide. One can recognise a tr-type G domain in the interval 97-383 (SMVRNIGIAA…AVCDYLPNPG (287 aa)). GTP contacts are provided by residues 106 to 113 (AHIDSGKT), 181 to 185 (DTPGH), and 235 to 238 (NKMD).

Belongs to the TRAFAC class translation factor GTPase superfamily. Classic translation factor GTPase family. EF-G/EF-2 subfamily.

The protein localises to the mitochondrion. The protein operates within protein biosynthesis; polypeptide chain elongation. Functionally, mitochondrial GTPase that catalyzes the GTP-dependent ribosomal translocation step during translation elongation. During this step, the ribosome changes from the pre-translocational (PRE) to the post-translocational (POST) state as the newly formed A-site-bound peptidyl-tRNA and P-site-bound deacylated tRNA move to the P and E sites, respectively. Catalyzes the coordinated movement of the two tRNA molecules, the mRNA and conformational changes in the ribosome. This chain is Elongation factor G, mitochondrial, found in Chaetomium globosum (strain ATCC 6205 / CBS 148.51 / DSM 1962 / NBRC 6347 / NRRL 1970) (Soil fungus).